The chain runs to 746 residues: Catalase-peroxidase (746 aa).

Polar residues predominate over residues Met1 to Lys20. The disordered stretch occupies residues Met1–Arg42. A cross-link (tryptophyl-tyrosyl-methioninium (Trp-Tyr) (with M-262)) is located at residues Trp113 to Tyr236. The active-site Proton acceptor is His114. Residues Tyr236–Met262 constitute a cross-link (tryptophyl-tyrosyl-methioninium (Tyr-Met) (with W-113)). His277 lines the heme b pocket.

The protein belongs to the peroxidase family. Peroxidase/catalase subfamily. In terms of assembly, homodimer or homotetramer. Heme b is required as a cofactor. Formation of the three residue Trp-Tyr-Met cross-link is important for the catalase, but not the peroxidase activity of the enzyme.

The catalysed reaction is H2O2 + AH2 = A + 2 H2O. The enzyme catalyses 2 H2O2 = O2 + 2 H2O. Bifunctional enzyme with both catalase and broad-spectrum peroxidase activity. May play a role in the intracellular survival of mycobacteria. This Mycobacterium intracellulare protein is Catalase-peroxidase.